A 653-amino-acid polypeptide reads, in one-letter code: Epithelial sodium channel subunit gamma (653 aa).

At 1–55 the chain is on the cytoplasmic side; sequence MAPGEKIKAKIKKNLPVKGPQAPTIKELMRWYCLNTNTHGCRRIVVSPGRLRRLL. Residues 56 to 76 form a helical membrane-spanning segment; it reads WIAFTLTAVGLIFWQCALLVF. Residues 77–538 are Extracellular-facing; it reads SFYTVSVSIK…EMLLSNFGGQ (462 aa). Intrachain disulfides connect Cys100–Cys287, Cys211–Cys218, Cys264–Cys271, Cys376–Cys461, Cys398–Cys457, Cys402–Cys453, Cys411–Cys438, and Cys413–Cys427. Residues 137 to 225 form a gating release of inhibition by proteolysis (GRIP); protease-sensitive region that is responsible for the proteolytic activation of the channel region; the sequence is RKQRDTESWS…SDCATYTFSS (89 aa). Residue Asn213 is glycosylated (N-linked (GlcNAc...) asparagine). N-linked (GlcNAc...) asparagine glycosylation occurs at Asn275. An N-linked (GlcNAc...) asparagine glycan is attached at Asn501. Residues 539–559 form a helical membrane-spanning segment; sequence LGLWMSCSVVCVIEIIEVFFI. Topologically, residues 560–653 are cytoplasmic; the sequence is DSLSIVTRRQ…LADTRLPDEP (94 aa). Positions 582–632 are disordered; that stretch reads AAPSAEAPSGAQGQENPALEIDDDLPTFTSALSLPPAPGAQVPGTPPPRYN. The short motif at 627–631 is the PY motif; recruits WW domain-containing proteins and is thereby required for ubiquitination and inhibition of the channel by NEDD4 and NEDD4L element; the sequence is PPPRY.

It belongs to the amiloride-sensitive sodium channel (TC 1.A.6) family. SCNN1G subfamily. As to quaternary structure, component of the heterotrimeric epithelial sodium channel (ENaC) composed of an alpha/SCNN1A, a beta/SCNN1B and a gamma/SCNN1G subunit. Interacts with WWP1 (via WW domains). Interacts with WWP2 (via WW domains); inhibits the channel. Interacts with the full-length immature form of PCSK9 (pro-PCSK9); inhibits ENaC by promoting its proteasomal degradation. Interacts with BPIFA1; the interaction is indirect via SCNN1B and inhibits the proteolytic maturation of SCNN1A and SCNN1G and the activation of ENaC. Phosphorylated on serine and threonine residues. Aldosterone and insulin increase the basal level of phosphorylation. Post-translationally, ubiquitinated. Can be ubiquitinated at multiple sites and undergo monoubiquitination and polyubiquitination. Ubiquitination by NEDD4 or NEDD4L inhibits the ENaC channel through endocytosis, intracellular retention and degradation of its individual subunits. In terms of processing, ENaC is activated through the proteolytic maturation of its subunits. Furin cleaves the SCNN1G subunit first, followed by cleavage by prostasin (PRSS8), which results in a stepwise increase in the open probability of the channel due to the release of an inhibitory tract. BPIFA1, which is recruited by the SCNN1B subunit, prevents the proteolytic activation of ENaC. N-glycosylated. N-linked glycans are processed to complex type during ENaC complex assembly and transport to the plasma membrane.

It localises to the apical cell membrane. The enzyme catalyses Na(+)(in) = Na(+)(out). Its activity is regulated as follows. Originally identified and characterized by its inhibition by the diuretic drug amiloride. In terms of biological role, this is one of the three pore-forming subunits of the heterotrimeric epithelial sodium channel (ENaC), a critical regulator of sodium balance and fluid homeostasis. ENaC operates in epithelial tissues, where it mediates the electrodiffusion of sodium ions from extracellular fluid through the apical membrane of cells, with water following osmotically. It plays a key role in maintaining sodium homeostasis through electrogenic sodium reabsorption in the kidneys. Additionally, ENaC is essential for airway surface liquid homeostasis, which is crucial for proper mucus clearance. This Oryctolagus cuniculus (Rabbit) protein is Epithelial sodium channel subunit gamma.